The chain runs to 423 residues: Zinc transporter ZIP13 (423 aa).

The Lumenal portion of the chain corresponds to 1 to 15 (MPGCPCPGIGMAGQR). Residues 16-36 (LLFLAALALELLGGAGGSQQA) traverse the membrane as a helical segment. Over 37-68 (LRSRGVAAACRLDSKESESWGALLSGERLETW) the chain is Cytoplasmic. The chain crosses the membrane as a helical span at residues 69–89 (ICSLLGSLMVGLSGVFPLLVI). At 90 to 108 (PLEMGTTLRSEAGARRLKQ) the chain is on the lumenal side. Residues 109-129 (LLSFALGGLLGNVFLHLLPEA) form a helical membrane-spanning segment. The Cytoplasmic segment spans residues 130–149 (WAYTNSASSGGERQSLQQQQ). Residues 150–170 (QLGLWVIAGFLTFLVLEKLFF) form a helical membrane-spanning segment. Residues 171 to 235 (DSKGKEETSQ…TIDNFTHGLA (65 aa)) are Lumenal-facing. Residues 236 to 256 (VAASFLVSKKIGLLTTMAILL) form a helical membrane-spanning segment. Residues 257-262 (HEIPHE) carry the XEXPHE-motif motif. The Cytoplasmic portion of the chain corresponds to 257–278 (HEIPHEVGDFAILLRAGFDRWS). Residues 279–299 (AAKLQLSTALGGLLGACFAIC) traverse the membrane as a helical segment. Topologically, residues 300–368 (AQSPKGVGTG…RAPPPATEET (69 aa)) are lumenal. Residues 369–389 (VAWILPFTSGGFLYIALVNVL) form a helical membrane-spanning segment. Topologically, residues 390–401 (PDLLEEDDPWRS) are cytoplasmic. Residues 402-422 (LQQVLLLCAGIVVMVLFSVFV) traverse the membrane as a helical segment. A topological domain (lumenal) is located at residue Glu-423.

The protein belongs to the ZIP transporter (TC 2.A.5) family. Homodimer.

It is found in the golgi apparatus membrane. The protein localises to the cytoplasmic vesicle membrane. The protein resides in the endoplasmic reticulum membrane. It catalyses the reaction Zn(2+)(in) = Zn(2+)(out). Its function is as follows. Functions as a zinc transporter transporting Zn(2+) from the Golgi apparatus to the cytosol and thus influences the zinc level at least in areas of the cytosol. May regulate beige adipocyte differentiation. The chain is Zinc transporter ZIP13 from Bos taurus (Bovine).